Reading from the N-terminus, the 154-residue chain is D-ribose pyranase 2 (154 aa).

Catalysis depends on His-20, which acts as the Proton donor. Residues Asp-28, His-98, and 121–123 contribute to the substrate site; that span reads WGN.

Belongs to the RbsD / FucU family. RbsD subfamily. Homodecamer.

Its subcellular location is the cytoplasm. The catalysed reaction is beta-D-ribopyranose = beta-D-ribofuranose. The protein operates within carbohydrate metabolism; D-ribose degradation; D-ribose 5-phosphate from beta-D-ribopyranose: step 1/2. Its function is as follows. Catalyzes the interconversion of beta-pyran and beta-furan forms of D-ribose. This chain is D-ribose pyranase 2, found in Rubrobacter xylanophilus (strain DSM 9941 / JCM 11954 / NBRC 16129 / PRD-1).